We begin with the raw amino-acid sequence, 366 residues long: Spermidine/putrescine import ATP-binding protein PotA (366 aa).

An ABC transporter domain is found at 8 to 239; that stretch reads IRFENVTKQF…PINKFVADFI (232 aa). Position 41–48 (41–48) interacts with ATP; that stretch reads GPSGCGKT.

The protein belongs to the ABC transporter superfamily. Spermidine/putrescine importer (TC 3.A.1.11.1) family. The complex is composed of two ATP-binding proteins (PotA), two transmembrane proteins (PotB and PotC) and a solute-binding protein (PotD).

The protein resides in the cell membrane. It catalyses the reaction ATP + H2O + polyamine-[polyamine-binding protein]Side 1 = ADP + phosphate + polyamineSide 2 + [polyamine-binding protein]Side 1.. Part of the ABC transporter complex PotABCD involved in spermidine/putrescine import. Responsible for energy coupling to the transport system. The sequence is that of Spermidine/putrescine import ATP-binding protein PotA from Listeria monocytogenes serotype 4b (strain F2365).